A 245-amino-acid chain; its full sequence is PF03932 family protein CutC (245 aa).

Belongs to the CutC family.

The protein localises to the cytoplasm. The protein is PF03932 family protein CutC of Photobacterium profundum (strain SS9).